A 319-amino-acid polypeptide reads, in one-letter code: CCAAT/enhancer-binding protein homolog 1 (319 aa).

A n' domain; required for axon regeneration region spans residues 53–67; that stretch reads SLTIAASLQQRDRER. The tract at residues 163 to 319 is disordered; the sequence is TRRAVKRPVP…QRHILENFNK (157 aa). Positions 171 to 181 are enriched in basic and acidic residues; the sequence is VPYDDYQKEYS. Acidic residues predominate over residues 182 to 198; it reads EESSDMTDNDGSVDDSY. Composition is skewed to basic and acidic residues over residues 225–248, 255–274, 281–291, and 302–319; these read LKAD…DAVR, KELQ…RIAE, SERDARRRDQD, and PMKE…NFNK. One can recognise a bZIP domain in the interval 233–308; that stretch reads EPTYKLKRAR…NKGPMKEQRM (76 aa). The segment at 237–271 is basic motif; that stretch reads KLKRARNNDAVRKSRKKAKELQDKKEAEHDKMKRR. Positions 275-308 are leucine-zipper; the sequence is LEGLLQSERDARRRDQDTLEQLLRNKGPMKEQRM.

This sequence belongs to the bZIP family. C/EBP subfamily. May interact with transcription factor ets-4. May interact (via N-terminus) with nipi-3. May interact (via N-terminus) with importin subunit alpha ima-3. Expressed in touch and motor neurons.

The protein resides in the synapse. It localises to the cytoplasm. The protein localises to the nucleus. Its subcellular location is the cell projection. It is found in the axon. Transcription factor. Binds to promoter regions of target genes, perhaps at the motif 5'-[AGCT]TT[AGT][TC]GAAA[ACT]-3'. Modulates expression of genes involved in development and in stress responses, including those regulating the p38/MAPK signaling pathways such as MAPKK sek-1 and phosphatase vhp-1. Involved in innate immunity. Plays a role in repressing the response to infection by the Gram-negative bacterium P.aeruginosa, perhaps acting independently of the pmk-1 or pmk-3 p38/MAPK pathways. However, also plays a protective role in the response to infection by P.aeruginosa. Required in axonal regrowth following injury and synaptogenesis. Following axon injury, in concert with transcription factor ets-4, activates expression of receptor tyrosine kinase svh-2. May function downstream of the Ca2+-activated p38/MAPK pathway to promote axon regeneration. Plays a role in modulating polymerization of neuronal microtubules. Involved in modulating lipid homeostasis. This Caenorhabditis elegans protein is CCAAT/enhancer-binding protein homolog 1.